Here is a 357-residue protein sequence, read N- to C-terminus: Protein AAR2 homolog (357 aa).

It belongs to the AAR2 family.

This chain is Protein AAR2 homolog, found in Caenorhabditis elegans.